Here is a 269-residue protein sequence, read N- to C-terminus: 4-hydroxy-tetrahydrodipicolinate reductase (269 aa).

Residues 11-16 (GASGRM) and Glu37 each bind NAD(+). An NADP(+)-binding site is contributed by Arg38. NAD(+)-binding positions include 101–103 (GTT) and 125–128 (AGNM). Residue His158 is the Proton donor/acceptor of the active site. His159 serves as a coordination point for (S)-2,3,4,5-tetrahydrodipicolinate. The active-site Proton donor is the Lys162. A (S)-2,3,4,5-tetrahydrodipicolinate-binding site is contributed by 168–169 (GT).

It belongs to the DapB family.

It localises to the cytoplasm. It catalyses the reaction (S)-2,3,4,5-tetrahydrodipicolinate + NAD(+) + H2O = (2S,4S)-4-hydroxy-2,3,4,5-tetrahydrodipicolinate + NADH + H(+). The catalysed reaction is (S)-2,3,4,5-tetrahydrodipicolinate + NADP(+) + H2O = (2S,4S)-4-hydroxy-2,3,4,5-tetrahydrodipicolinate + NADPH + H(+). The protein operates within amino-acid biosynthesis; L-lysine biosynthesis via DAP pathway; (S)-tetrahydrodipicolinate from L-aspartate: step 4/4. Its function is as follows. Catalyzes the conversion of 4-hydroxy-tetrahydrodipicolinate (HTPA) to tetrahydrodipicolinate. This Ruegeria sp. (strain TM1040) (Silicibacter sp.) protein is 4-hydroxy-tetrahydrodipicolinate reductase.